Here is a 206-residue protein sequence, read N- to C-terminus: Ribosomal RNA small subunit methyltransferase G (206 aa).

S-adenosyl-L-methionine-binding positions include Gly-73, Leu-78, 124–125 (VE), and Arg-139.

This sequence belongs to the methyltransferase superfamily. RNA methyltransferase RsmG family.

The protein localises to the cytoplasm. It carries out the reaction guanosine(527) in 16S rRNA + S-adenosyl-L-methionine = N(7)-methylguanosine(527) in 16S rRNA + S-adenosyl-L-homocysteine. Functionally, specifically methylates the N7 position of guanine in position 527 of 16S rRNA. The polypeptide is Ribosomal RNA small subunit methyltransferase G (Yersinia pseudotuberculosis serotype O:1b (strain IP 31758)).